The chain runs to 475 residues: ATP synthase subunit beta (475 aa).

ATP is bound at residue 152–159 (GGAGVGKT).

Belongs to the ATPase alpha/beta chains family. In terms of assembly, F-type ATPases have 2 components, CF(1) - the catalytic core - and CF(0) - the membrane proton channel. CF(1) has five subunits: alpha(3), beta(3), gamma(1), delta(1), epsilon(1). CF(0) has three main subunits: a(1), b(2) and c(9-12). The alpha and beta chains form an alternating ring which encloses part of the gamma chain. CF(1) is attached to CF(0) by a central stalk formed by the gamma and epsilon chains, while a peripheral stalk is formed by the delta and b chains.

Its subcellular location is the cell inner membrane. It catalyses the reaction ATP + H2O + 4 H(+)(in) = ADP + phosphate + 5 H(+)(out). Its function is as follows. Produces ATP from ADP in the presence of a proton gradient across the membrane. The catalytic sites are hosted primarily by the beta subunits. In Wolbachia sp. subsp. Drosophila simulans (strain wRi), this protein is ATP synthase subunit beta.